We begin with the raw amino-acid sequence, 340 residues long: Protein B17 (340 aa).

This sequence belongs to the orthopoxvirus B17 protein family.

This is Protein B17 from Vaccinia virus (strain Copenhagen) (VACV).